A 113-amino-acid chain; its full sequence is MKLVLFKIAVALLYLLSFFLHRLHLRLRHLHRRRRRRHHRRHHRRHHHHRRRRRRRRRRRRRHHRHHHHRHRRRRHYLHLYHQYRSSYYHPPHRYLHPLLLPFPQKHRDNHLV.

Residues 4 to 26 form a helical membrane-spanning segment; sequence VLFKIAVALLYLLSFFLHRLHLR. The interval 32 to 74 is disordered; sequence RRRRRRHHRRHHRRHHHHRRRRRRRRRRRRRHHRHHHHRHRRR.

It is found in the membrane. This is an uncharacterized protein from Saccharomyces cerevisiae (strain ATCC 204508 / S288c) (Baker's yeast).